The chain runs to 76 residues: Nemertide alpha-1 (76 aa).

The first 28 residues, 1–28 (YRIASSSIAKMKTAVFLVGLLFLGLVFA), serve as a signal peptide directing secretion. Positions 29-44 (DEAAIDSEFDQSIDKR) are excised as a propeptide. Cystine bridges form between cysteine 46–cysteine 60, cysteine 53–cysteine 64, and cysteine 59–cysteine 70. 2 positions are modified to 4-hydroxyproline: proline 72 and proline 73.

Belongs to the nemertide family. As to expression, confined to the epidermis and to the mucus layer.

The protein resides in the secreted. In terms of biological role, highly potent toxin against insect sodium channel (Nav) and with less potent activity against mammalian sodium channels. Potently inhibits inactivation of insect sodium channels of B.germanica (BgNav1) (EC(50)=8.6 nM), D.melanogaster (Dm Nav1), and arachnid sodium channel V.destructor (VdNav1). Also delays the inactivation of most mammalian Nav channels tested (human Nav1.1/SCN1A; EC(50)=124.1 nM, rat Nav1.2/SCN2A; EC(50)=359.6 nM, rat Nav1.3/SCN3A; EC(50)=135.4 nM, rat Nav1.4/SCN4A; EC(50)=145.5 nM, human Nav1.5/SCN5A; EC(50)=138.3 nM, mouse Nav1.6/SCN8A; EC(50)=240.4 nM, human Nav1.9/SCN9A; EC(50)=76.5 nM). 1 uM is enough to completely inhibits the inactivation, resulting in sustained non-inactivating currents. In addition, the toxin significantly enhances the recovery from inactivation, and the open state is not required for the toxin to interact with the channel. In vivo, injection into green crabs (Carcinus maenas at 1 mug/kg) of small doses (1-5 ug/kg) results in slow and fast permanent paralysis, whereas injection of high doses (more than 10 ug/kg) causes death. Injection into juvenile Blaptica dubia cockroaches results in death or permanent paralysis at doses higher than 7.1 ug/kg. Injection into brine shrimp (Artemia salina) stops movement or causes death after 24 hours (EC(50)=0.3 uM). In the rare inherited cardiac arrhythmia Brugada syndrome 1 (BRGDA1), this toxin is able to restore the loss of function by reducing channel inactivation, without affecting activation, by binding to Nav1.5/SCN5A. The polypeptide is Nemertide alpha-1 (Lineus lacteus (Ribbon worm)).